Consider the following 474-residue polypeptide: tRNA modification GTPase MnmE (474 aa).

3 residues coordinate (6S)-5-formyl-5,6,7,8-tetrahydrofolate: Arg28, Glu92, and Arg131. Positions 227-395 (GIPVAIVGTT…LKGELTQIME (169 aa)) constitute a TrmE-type G domain. Asn237 is a binding site for K(+). GTP-binding positions include 237-242 (NVGKST), 256-262 (SDIHGTT), 281-284 (DTAG), and 376-378 (SAR). Position 241 (Ser241) interacts with Mg(2+). The K(+) site is built by Ser256, Ile258, and Thr261. Thr262 provides a ligand contact to Mg(2+). A (6S)-5-formyl-5,6,7,8-tetrahydrofolate-binding site is contributed by Lys474.

This sequence belongs to the TRAFAC class TrmE-Era-EngA-EngB-Septin-like GTPase superfamily. TrmE GTPase family. As to quaternary structure, homodimer. Heterotetramer of two MnmE and two MnmG subunits. Requires K(+) as cofactor.

Its subcellular location is the cytoplasm. Its function is as follows. Exhibits a very high intrinsic GTPase hydrolysis rate. Involved in the addition of a carboxymethylaminomethyl (cmnm) group at the wobble position (U34) of certain tRNAs, forming tRNA-cmnm(5)s(2)U34. The polypeptide is tRNA modification GTPase MnmE (Porphyromonas gingivalis (strain ATCC BAA-308 / W83)).